Consider the following 344-residue polypeptide: Probable aldo-keto reductase 1 (344 aa).

Tyr-63 serves as the catalytic Proton donor. His-130 serves as a coordination point for substrate. Position 209–219 (209–219) interacts with NADP(+); sequence SPLGLGFFAAG.

Belongs to the aldo/keto reductase family.

This is Probable aldo-keto reductase 1 from Arabidopsis thaliana (Mouse-ear cress).